The chain runs to 525 residues: Potassium voltage-gated channel subfamily A member 3 (525 aa).

The segment at 1–23 (MTVVPGDHLLEPEAAGGGGGDPP) is disordered. The Cytoplasmic segment spans residues 1–184 (MTVVPGDHLL…EYPESSGPAR (184 aa)). The helical transmembrane segment at 185 to 203 (GIAIVSVLVILISIVIFCL) threads the bilayer. Over 204–244 (ETLPEFRDEKDYPASPSQDVFEAANNSTSGASSGASSFSDP) the chain is Extracellular. A glycan (N-linked (GlcNAc...) asparagine) is linked at asparagine 229. A helical transmembrane segment spans residues 245 to 266 (FFVVETLCIIWFSFELLVRFFA). Cysteine 267 is lipidated: S-palmitoyl cysteine. Over 267–277 (CPSKATFSRNI) the chain is Cytoplasmic. Residues 278–298 (MNLIDIVAIIPYFITLGTELA) form a helical membrane-spanning segment. The Extracellular segment spans residues 299 to 312 (ERQGNGQQAMSLAI). The chain crosses the membrane as a helical; Voltage-sensor span at residues 313 to 331 (LRVIRLVRVFRIFKLSRHS). Residues 332–347 (KGLQILGQTLKASMRE) are Cytoplasmic-facing. The chain crosses the membrane as a helical span at residues 348–367 (LGLLIFFLFIGVILFSSAVY). Topologically, residues 368-408 (FAEADDPSSGFNSIPDAFWWAVVTMTTVGYGDMHPVTIGGK) are extracellular. The short motif at 394-399 (TVGYGD) is the Selectivity filter element. A helical transmembrane segment spans residues 409-431 (IVGSLCAIAGVLTIALPVPVIVS). Residues 432–525 (NFNYFYHRET…VNIKKIFTDV (94 aa)) lie on the Cytoplasmic side of the membrane. The interval 432 to 525 (NFNYFYHRET…VNIKKIFTDV (94 aa)) is interaction with KCNE4. Tyrosine 449 carries the phosphotyrosine modification. At serine 470 the chain carries Phosphoserine; by PKA. The PDZ-binding signature appears at 523–525 (TDV).

The protein belongs to the potassium channel family. A (Shaker) (TC 1.A.1.2) subfamily. Kv1.3/KCNA3 sub-subfamily. As to quaternary structure, homotetramer. Forms heterooligomers with KCNE4 which inhibits KCNA3 activity by impairing localization to the cell membrane. The stoichiometry of KCNA3 and KCNE4 in the heterooligomers are 4:1, 4:2, 4:3 or 4:4 respectively. Increasing the number of KCNE4 subunits steadily slows the activation KCNA3 and decreases its abundance at the cell membrane. However, a single subunit of KCNE4 is sufficient for the cooperative enhancement of the inactivating function of the channel. Interacts with SEC24D; this interaction is reduced in the presence of KCNE4. Interacts with DLG1, DLG2 and DLG4 via their PDZ domains. Phosphorylation on Tyr-449 inhibits its channel activity. Post-translationally, N-glycosylation promotes the cell surface expression.

The protein resides in the cell membrane. The enzyme catalyses K(+)(in) = K(+)(out). Its activity is regulated as follows. Activity is up-regulated by JAK2. In terms of biological role, mediates the voltage-dependent potassium ion permeability of excitable membranes. Assuming opened or closed conformations in response to the voltage difference across the membrane, the protein forms a potassium-selective channel through which potassium ions may pass in accordance with their electrochemical gradient. This is Potassium voltage-gated channel subfamily A member 3 (Kcna3) from Rattus norvegicus (Rat).